Reading from the N-terminus, the 307-residue chain is Malate dehydrogenase (307 aa).

Residues 8 to 13 and aspartate 33 each bind NAD(+); that span reads GAGRVG. Substrate is bound by residues arginine 82 and arginine 88. NAD(+)-binding positions include asparagine 95 and 118-120; that span reads VSN. Substrate-binding residues include asparagine 120 and arginine 151. Histidine 175 functions as the Proton acceptor in the catalytic mechanism.

This sequence belongs to the LDH/MDH superfamily. MDH type 3 family.

It catalyses the reaction (S)-malate + NAD(+) = oxaloacetate + NADH + H(+). Functionally, catalyzes the reversible oxidation of malate to oxaloacetate. This is Malate dehydrogenase from Thioalkalivibrio sulfidiphilus (strain HL-EbGR7).